The primary structure comprises 228 residues: MIDTQALRAEQRLRASEVIRQDDFLVVPPAFIAGADVGFEQEGAVTRAAIAILRYPSLELVEYQVARVATTMPYIPGFLSFREYPALLAAWEQLHQKPDLVLVDGHGISHPRRLGVASHFGLLVNVPTIGVAKKRLCGKFAPLDEATDALAPLEDKGEQLGWVWRSKARCNPLFISTGHRVGADSALAWVQRCMAGYRLPEPTRWADAIASRRPAFQRWLQQHPEVSQ.

Mg(2+)-binding residues include Asp-36 and Asp-104.

This sequence belongs to the endonuclease V family. Mg(2+) serves as cofactor.

The protein localises to the cytoplasm. The catalysed reaction is Endonucleolytic cleavage at apurinic or apyrimidinic sites to products with a 5'-phosphate.. Functionally, DNA repair enzyme involved in the repair of deaminated bases. Selectively cleaves double-stranded DNA at the second phosphodiester bond 3' to a deoxyinosine leaving behind the intact lesion on the nicked DNA. This is Endonuclease V from Serratia proteamaculans (strain 568).